The primary structure comprises 500 residues: L-arabinose isomerase (500 aa).

Mn(2+)-binding residues include E306, E333, H350, and H450.

The protein belongs to the arabinose isomerase family. Homohexamer. The cofactor is Mn(2+).

The catalysed reaction is beta-L-arabinopyranose = L-ribulose. Its pathway is carbohydrate degradation; L-arabinose degradation via L-ribulose; D-xylulose 5-phosphate from L-arabinose (bacterial route): step 1/3. Its function is as follows. Catalyzes the conversion of L-arabinose to L-ribulose. The chain is L-arabinose isomerase from Escherichia fergusonii (strain ATCC 35469 / DSM 13698 / CCUG 18766 / IAM 14443 / JCM 21226 / LMG 7866 / NBRC 102419 / NCTC 12128 / CDC 0568-73).